The primary structure comprises 398 residues: Phosphoglycerate kinase (398 aa).

Substrate-binding positions include 23 to 25 (DFN), R38, 61 to 64 (HMGK), R122, and R155. ATP contacts are provided by residues K206, G297, E328, and 354-357 (GGDS).

Belongs to the phosphoglycerate kinase family. In terms of assembly, monomer.

Its subcellular location is the cytoplasm. The enzyme catalyses (2R)-3-phosphoglycerate + ATP = (2R)-3-phospho-glyceroyl phosphate + ADP. It participates in carbohydrate degradation; glycolysis; pyruvate from D-glyceraldehyde 3-phosphate: step 2/5. The protein is Phosphoglycerate kinase of Clostridium botulinum (strain Kyoto / Type A2).